A 316-amino-acid chain; its full sequence is M-phase inducer phosphatase cdc-25.3 (316 aa).

Residues 35–65 (QNRQHSSAISHISNSSPPTRKRSIDGGYTSG) form a disordered region. The span at 39–50 (HSSAISHISNSS) shows a compositional bias: low complexity. Positions 136–242 (FMQKYILIDC…FYAFTRGLEK (107 aa)) constitute a Rhodanese domain.

Belongs to the MPI phosphatase family.

It carries out the reaction O-phospho-L-tyrosyl-[protein] + H2O = L-tyrosyl-[protein] + phosphate. The protein is M-phase inducer phosphatase cdc-25.3 (cdc-25.3) of Caenorhabditis elegans.